Consider the following 631-residue polypeptide: 1-deoxy-D-xylulose-5-phosphate synthase (631 aa).

Residues histidine 73 and 114 to 116 (SHA) each bind thiamine diphosphate. Aspartate 145 is a Mg(2+) binding site. Thiamine diphosphate-binding positions include 146-147 (GA), asparagine 175, tyrosine 286, and glutamate 368. Asparagine 175 is a binding site for Mg(2+).

This sequence belongs to the transketolase family. DXPS subfamily. Homodimer. The cofactor is Mg(2+). It depends on thiamine diphosphate as a cofactor.

The catalysed reaction is D-glyceraldehyde 3-phosphate + pyruvate + H(+) = 1-deoxy-D-xylulose 5-phosphate + CO2. The protein operates within metabolic intermediate biosynthesis; 1-deoxy-D-xylulose 5-phosphate biosynthesis; 1-deoxy-D-xylulose 5-phosphate from D-glyceraldehyde 3-phosphate and pyruvate: step 1/1. Functionally, catalyzes the acyloin condensation reaction between C atoms 2 and 3 of pyruvate and glyceraldehyde 3-phosphate to yield 1-deoxy-D-xylulose-5-phosphate (DXP). This chain is 1-deoxy-D-xylulose-5-phosphate synthase, found in Nocardia farcinica (strain IFM 10152).